Consider the following 544-residue polypeptide: Chaperonin GroEL 3 (544 aa).

ATP contacts are provided by residues 30–33 (TLGP), K51, 87–91 (DGTTT), G415, and D496.

It belongs to the chaperonin (HSP60) family. Forms a cylinder of 14 subunits composed of two heptameric rings stacked back-to-back. Interacts with the co-chaperonin GroES.

Its subcellular location is the cytoplasm. It catalyses the reaction ATP + H2O + a folded polypeptide = ADP + phosphate + an unfolded polypeptide.. Functionally, together with its co-chaperonin GroES, plays an essential role in assisting protein folding. The GroEL-GroES system forms a nano-cage that allows encapsulation of the non-native substrate proteins and provides a physical environment optimized to promote and accelerate protein folding. The protein is Chaperonin GroEL 3 of Rhizobium etli (strain ATCC 51251 / DSM 11541 / JCM 21823 / NBRC 15573 / CFN 42).